The following is a 417-amino-acid chain: Lysosome-associated membrane glycoprotein 1 (417 aa).

Positions 1-28 are cleaved as a signal peptide; it reads MAAPGSARRPLLLLLLLLLLGLMHCASA. Positions 29–194 are first lumenal domain; the sequence is AMFMVKNGNG…SRGETRCEQD (166 aa). Residues 29 to 382 are Lumenal-facing; that stretch reads AMFMVKNGNG…EECLLDENSM (354 aa). N-linked (GlcNAc...) asparagine glycosylation is found at Asn-37 and Asn-45. An intrachain disulfide couples Cys-41 to Cys-80. An N-linked (GlcNAc...) (polylactosaminoglycan) asparagine glycan is attached at Asn-62. 4 N-linked (GlcNAc...) asparagine glycosylation sites follow: Asn-76, Asn-84, Asn-103, and Asn-107. 2 N-linked (GlcNAc...) (polylactosaminoglycan) asparagine glycosylation sites follow: Asn-121 and Asn-130. An intrachain disulfide couples Cys-155 to Cys-191. N-linked (GlcNAc...) asparagine glycosylation is found at Asn-165 and Asn-181. The segment at 184–221 is disordered; the sequence is FSRGETRCEQDRPSPTTAPPAPPSPSPSPVPKSPSVDK. A hinge region spans residues 195 to 227; the sequence is RPSPTTAPPAPPSPSPSPVPKSPSVDKYNVSGT. Residue Ser-197 is glycosylated (O-linked (GalNAc...) serine; partial). 2 O-linked (GalNAc...) threonine glycosylation sites follow: Thr-199 and Thr-200. Residues 199–215 are compositionally biased toward pro residues; that stretch reads TTAPPAPPSPSPSPVPK. O-linked (GalNAc...) serine glycosylation is found at Ser-207, Ser-209, and Ser-211. Residues Asn-223 and Asn-228 are each glycosylated (N-linked (GlcNAc...) (polylactosaminoglycan) asparagine). Positions 228–382 are second lumenal domain; sequence NGTCLLASMG…EECLLDENSM (155 aa). Cys-231 and Cys-269 are oxidised to a cystine. 5 N-linked (GlcNAc...) asparagine glycosylation sites follow: Asn-241, Asn-249, Asn-261, Asn-293, and Asn-322. An intrachain disulfide couples Cys-338 to Cys-375. A helical transmembrane segment spans residues 383-410; the sequence is LIPIAVGGALAGLVLIVLIAYLVGRKRS. At 411–417 the chain is on the cytoplasmic side; sequence HAGYQTI.

This sequence belongs to the LAMP family. Interacts with ABCB9; this interaction strongly stabilizes ABCB9 and protects ABCB9 against lysosomal degradation. Interacts with FURIN. Interacts with TMEM175; inhibiting the proton channel activity of TMEM175. As to quaternary structure, (Microbial infection) Interacts with Lassa virus protein glycoprotein. In terms of assembly, (Microbial infection) Interacts with mumps virus protein F; this interaction promotes protein F cleavage by FURIN. In terms of processing, O- and N-glycosylated; some of the 18 N-linked glycans are polylactosaminoglycans. (Microbial infection) The glycosylation of Asn-76 is essential for Lassa virus entry into cells.

It localises to the lysosome membrane. It is found in the endosome membrane. The protein resides in the late endosome membrane. Its subcellular location is the cell membrane. The protein localises to the cytolytic granule membrane. Its function is as follows. Lysosomal membrane glycoprotein which plays an important role in lysosome biogenesis, lysosomal pH regulation, autophagy and cholesterol homeostasis. Acts as an important regulator of lysosomal lumen pH regulation by acting as a direct inhibitor of the proton channel TMEM175, facilitating lysosomal acidification for optimal hydrolase activity. Also plays an important role in NK-cells cytotoxicity. Mechanistically, participates in cytotoxic granule movement to the cell surface and perforin trafficking to the lytic granule. In addition, protects NK-cells from degranulation-associated damage induced by their own cytotoxic granule content. Presents carbohydrate ligands to selectins. (Microbial infection) Acts as a receptor for Lassa virus glycoprotein. Also promotes fusion of the virus with host membrane in less acidic endosomes. Functionally, (Microbial infection) Supports the FURIN-mediated cleavage of mumps virus fusion protein F by interacting with both FURIN and the unprocessed form but not the processed form of the viral protein F. This is Lysosome-associated membrane glycoprotein 1 from Homo sapiens (Human).